The sequence spans 25 residues: Flagellar filament core protein flaB3 (25 aa).

Belongs to the bacterial flagellin family. As to quaternary structure, the flagellum consists of an outer layer composed of two sheath proteins, flaA1 (44 kDa) and flaA2 (35 kDa) around a core that contains three proteins flaB1 (37 kDa), flaB2 (34 kDa) and flaB3 (32 kDa).

It is found in the periplasmic flagellum. The protein localises to the periplasm. Component of the core of the flagella. This Brachyspira hyodysenteriae (Treponema hyodysenteriae) protein is Flagellar filament core protein flaB3 (flaB3).